We begin with the raw amino-acid sequence, 148 residues long: Small ribosomal subunit protein bS6 (148 aa).

Residues 97 to 148 (EEGPSAMLQRRDDRERGDRGDRGPRRDFDDRGPRRPREDDRPRRSREDEGDE) form a disordered region.

This sequence belongs to the bacterial ribosomal protein bS6 family.

Functionally, binds together with bS18 to 16S ribosomal RNA. The polypeptide is Small ribosomal subunit protein bS6 (Chelativorans sp. (strain BNC1)).